We begin with the raw amino-acid sequence, 84 residues long: Putative membrane protein insertion efficiency factor (84 aa).

The protein belongs to the UPF0161 family.

The protein localises to the cell inner membrane. Functionally, could be involved in insertion of integral membrane proteins into the membrane. This Shewanella oneidensis (strain ATCC 700550 / JCM 31522 / CIP 106686 / LMG 19005 / NCIMB 14063 / MR-1) protein is Putative membrane protein insertion efficiency factor.